The chain runs to 689 residues: Glycine--tRNA ligase beta subunit (689 aa).

Belongs to the class-II aminoacyl-tRNA synthetase family. As to quaternary structure, tetramer of two alpha and two beta subunits.

It localises to the cytoplasm. It carries out the reaction tRNA(Gly) + glycine + ATP = glycyl-tRNA(Gly) + AMP + diphosphate. This chain is Glycine--tRNA ligase beta subunit, found in Shewanella baltica (strain OS223).